Here is a 299-residue protein sequence, read N- to C-terminus: Oxygen-dependent coproporphyrinogen-III oxidase (299 aa).

Residue S92 coordinates substrate. Mn(2+) contacts are provided by H96 and H106. H106 functions as the Proton donor in the catalytic mechanism. Residue 108–110 participates in substrate binding; that stretch reads NVR. Mn(2+)-binding residues include H145 and H175. The important for dimerization stretch occupies residues 240–275; sequence YVEFNLVWDRGTLFGLQTGGRTESILMSMPPLVRWE. 258-260 contributes to the substrate binding site; that stretch reads GGR.

The protein belongs to the aerobic coproporphyrinogen-III oxidase family. In terms of assembly, homodimer. Mn(2+) is required as a cofactor.

The protein resides in the cytoplasm. It catalyses the reaction coproporphyrinogen III + O2 + 2 H(+) = protoporphyrinogen IX + 2 CO2 + 2 H2O. It participates in porphyrin-containing compound metabolism; protoporphyrin-IX biosynthesis; protoporphyrinogen-IX from coproporphyrinogen-III (O2 route): step 1/1. Involved in the heme biosynthesis. Catalyzes the aerobic oxidative decarboxylation of propionate groups of rings A and B of coproporphyrinogen-III to yield the vinyl groups in protoporphyrinogen-IX. This is Oxygen-dependent coproporphyrinogen-III oxidase from Escherichia coli (strain SE11).